Reading from the N-terminus, the 176-residue chain is Large ribosomal subunit protein eL6 (176 aa).

The segment at 1 to 27 (MSQVAPKWYQSEDVPAPKQTRKTARPQ) is disordered.

It belongs to the eukaryotic ribosomal protein eL6 family. In terms of assembly, component of the large ribosomal subunit. Mature ribosomes consist of a small (40S) and a large (60S) subunit. The 40S subunit contains about 32 different proteins and 1 molecule of RNA (18S). The 60S subunit contains 45 different proteins and 3 molecules of RNA (25S, 5.8S and 5S).

The protein localises to the cytoplasm. Component of the ribosome, a large ribonucleoprotein complex responsible for the synthesis of proteins in the cell. The small ribosomal subunit (SSU) binds messenger RNAs (mRNAs) and translates the encoded message by selecting cognate aminoacyl-transfer RNA (tRNA) molecules. The large subunit (LSU) contains the ribosomal catalytic site termed the peptidyl transferase center (PTC), which catalyzes the formation of peptide bonds, thereby polymerizing the amino acids delivered by tRNAs into a polypeptide chain. The nascent polypeptides leave the ribosome through a tunnel in the LSU and interact with protein factors that function in enzymatic processing, targeting, and the membrane insertion of nascent chains at the exit of the ribosomal tunnel. The sequence is that of Large ribosomal subunit protein eL6 from Candida albicans (strain SC5314 / ATCC MYA-2876) (Yeast).